The chain runs to 192 residues: Peptidyl-tRNA hydrolase (192 aa).

Residue Tyr14 coordinates tRNA. His19 serves as the catalytic Proton acceptor. TRNA-binding residues include Tyr64, Asn66, and Asn112.

The protein belongs to the PTH family. Monomer.

It is found in the cytoplasm. It carries out the reaction an N-acyl-L-alpha-aminoacyl-tRNA + H2O = an N-acyl-L-amino acid + a tRNA + H(+). Functionally, hydrolyzes ribosome-free peptidyl-tRNAs (with 1 or more amino acids incorporated), which drop off the ribosome during protein synthesis, or as a result of ribosome stalling. In terms of biological role, catalyzes the release of premature peptidyl moieties from peptidyl-tRNA molecules trapped in stalled 50S ribosomal subunits, and thus maintains levels of free tRNAs and 50S ribosomes. The polypeptide is Peptidyl-tRNA hydrolase (Anaeromyxobacter sp. (strain K)).